The chain runs to 66 residues: Large ribosomal subunit protein uL29 (66 aa).

The protein belongs to the universal ribosomal protein uL29 family.

The protein is Large ribosomal subunit protein uL29 of Rhizobium johnstonii (strain DSM 114642 / LMG 32736 / 3841) (Rhizobium leguminosarum bv. viciae).